A 382-amino-acid polypeptide reads, in one-letter code: Probable dual-specificity RNA methyltransferase RlmN (382 aa).

Catalysis depends on E118, which acts as the Proton acceptor. The 247-residue stretch at 124–370 (YDKRVTMCIS…TTVRDTRGSD (247 aa)) folds into the Radical SAM core domain. The cysteines at positions 131 and 375 are disulfide-linked. Residues C138, C142, and C145 each contribute to the [4Fe-4S] cluster site. S-adenosyl-L-methionine-binding positions include 196–197 (GE), S230, 253–255 (SLH), and N332. Residue C375 is the S-methylcysteine intermediate of the active site.

The protein belongs to the radical SAM superfamily. RlmN family. [4Fe-4S] cluster is required as a cofactor.

The protein localises to the cytoplasm. It catalyses the reaction adenosine(2503) in 23S rRNA + 2 reduced [2Fe-2S]-[ferredoxin] + 2 S-adenosyl-L-methionine = 2-methyladenosine(2503) in 23S rRNA + 5'-deoxyadenosine + L-methionine + 2 oxidized [2Fe-2S]-[ferredoxin] + S-adenosyl-L-homocysteine. The catalysed reaction is adenosine(37) in tRNA + 2 reduced [2Fe-2S]-[ferredoxin] + 2 S-adenosyl-L-methionine = 2-methyladenosine(37) in tRNA + 5'-deoxyadenosine + L-methionine + 2 oxidized [2Fe-2S]-[ferredoxin] + S-adenosyl-L-homocysteine. Specifically methylates position 2 of adenine 2503 in 23S rRNA and position 2 of adenine 37 in tRNAs. The protein is Probable dual-specificity RNA methyltransferase RlmN of Kocuria rhizophila (strain ATCC 9341 / DSM 348 / NBRC 103217 / DC2201).